Here is a 187-residue protein sequence, read N- to C-terminus: Elongation factor P (187 aa).

The protein belongs to the elongation factor P family.

The protein resides in the cytoplasm. It functions in the pathway protein biosynthesis; polypeptide chain elongation. Its function is as follows. Involved in peptide bond synthesis. Stimulates efficient translation and peptide-bond synthesis on native or reconstituted 70S ribosomes in vitro. Probably functions indirectly by altering the affinity of the ribosome for aminoacyl-tRNA, thus increasing their reactivity as acceptors for peptidyl transferase. This is Elongation factor P from Parafrankia sp. (strain EAN1pec).